We begin with the raw amino-acid sequence, 13477 residues long: Mucin-3B (13477 aa).

The signal sequence occupies residues 1-21 (MQLLGLLSILWMLKSSPGATG). Low complexity predominate over residues 219–234 (TISSTTRTTERTPLPT). Disordered regions lie at residues 219–243 (TISS…TMSP), 327–347 (TRST…TVTD), 360–383 (GTLS…TPMT), 513–559 (SMTT…PSTL), 622–643 (ATTP…STPS), 815–839 (TTTN…TGTG), 923–968 (TSQT…STTE), 1154–1179 (PSMS…TSTL), 1480–1511 (SPTV…STEN), 1529–1601 (SISA…FPET), 1619–1638 (MTST…VTSM), 1692–1714 (TTST…TDSM), 1944–1968 (TTSA…TFTS), 2064–2123 (TPNA…IAKS), 2170–2197 (STSM…SGGI), 2275–2308 (SSSM…AEST), 2442–2462 (RSTP…VKGS), 2476–2497 (LSME…TATT), 2509–2537 (SHST…GPPT), 2591–2610 (SAMS…TETS), 2672–2717 (TSTL…FSSS), 2812–2832 (TTIT…STST), 2845–2867 (TMTE…STTE), 2922–2947 (SRIP…SVGI), 3074–3109 (ETPS…TPDI), 3309–3395 (TTSH…NSNS), 3420–3481 (ITTT…SHST), 3545–3565 (STTS…STPS), 3654–3727 (SITT…STTA), 3740–3812 (ITTI…TTAE), 4014–4047 (TETT…SIAT), 4067–4106 (TSNS…HSTP), 4182–4249 (TTET…SSIT), 4269–4313 (NSTS…PSFT), 4510–4530 (SHST…SHST), 4557–4617 (TETT…STSS), 4630–4651 (YSPS…STPS), 4802–4830 (TSSF…TATG), 4953–4986 (HSLP…KTIS), 5128–5203 (YTSS…ITTT), 5455–5486 (ITNT…PSFT), 5627–5680 (TTKT…ATSK), 5834–5908 (TTSY…HSPP), 5957–5977 (STPS…SSPS), 5990–6017 (HSTA…SSIT), 6030–6080 (TSSI…PPIF), 6120–6150 (TTET…SFTS), 6172–6197 (TEST…HTPP), 6456–6481 (TETP…HSTP), 6541–6598 (TKTT…TSTS), 6846–6867 (TTGT…TKTT), 6946–6971 (ITTT…RTSH), 6999–7021 (TTES…ETRS), 7067–7093 (TTET…HSPP), 7170–7206 (TETA…TTGI), 7225–7244 (SHST…ISHS), 7299–7329 (FTSS…TSHS), 7400–7433 (SYTS…HRTP), 7476–7532 (TETI…TTST), 7578–7600 (TGTS…TTSH), 7731–7766 (TEIT…ATSK), 7922–7996 (SHST…PPIF), 8036–8066 (TTET…SFTS), 8088–8113 (TEST…HTPP), 8372–8397 (TETP…HSTP), 8457–8514 (TKTT…TSTS), 8762–8783 (TTGT…TKTT), 8862–8887 (ITTT…RTSH), 8915–8941 (TTES…HSPP), 8983–9009 (TTET…HSPP), 9052–9122 (AETT…TTGI), 9141–9160 (SHST…ISHS), 9215–9240 (FTSS…TSTE), 9335–9366 (TSSI…HRTP), 9409–9465 (TETI…TTST), 9566–9589 (SHST…NPSL), 9612–9674 (TTET…PPSF), 9734–9760 (TTSH…SSFT), 9828–9859 (TSSI…HSTP), 9883–9908 (TTTE…RSHS), 9921–9973 (TTSH…SKTI), 10076–10099 (SDST…SPSF), 10120–10166 (ITTT…TVPS), 10189–10285 (ITTE…SPLS), 10389–10425 (TSSI…LSSA), 10462–10481 (TTKT…TSTK), 10501–10537 (SHSS…TSTS), 10640–10660 (TTSF…TPSF), 10750–10828 (TTTE…QRSP), 10887–11032 (TTET…SPSS), 11044–11065 (SHST…HSTP), 11276–11317 (TGTE…SPSH), 11446–11482 (STTA…ITTT), 11566–11697 (TTET…PGFS), 11754–11779 (TKTT…HSTP), 11818–11949 (SIAT…HSPP), 12067–12103 (TSSF…STPV), 12186–12220 (PSYT…HSTP), 12280–12323 (TETT…STPI), 12364–12452 (TTET…TTET), 12468–12578 (EMTS…NTPS), 12616–12639 (FTTA…DIPT), 12681–12700 (SSPS…TSPT), 12785–12805 (IPST…LQTS), 12985–13011 (TSSM…TVPT), and 13052–13086 (SLPT…TPTT). Composition is skewed to low complexity over residues 513-538 (SMTT…LSST) and 547-559 (TSHT…PSTL). A compositionally biased stretch (low complexity) spans 1620–1638 (TSTPPITSSVTPTNTVTSM). Residues 1944 to 1956 (TTSATMEPPSSSV) show a composition bias toward polar residues. The segment covering 1957–1968 (AATDTGQTTFTS) has biased composition (low complexity). Polar residues predominate over residues 2066 to 2091 (NASSMTTSETTYPNSPTGPVTNSMSK). The span at 2096 to 2107 (ASMTQTSSTATS) shows a compositional bias: low complexity. Positions 2113–2123 (PSGSTTEIAKS) are enriched in polar residues. Low complexity predominate over residues 2170–2185 (STSMTPSTVSTSIPTS). The segment covering 2186–2195 (QPKTVNSSSG) has biased composition (polar residues). 2 stretches are compositionally biased toward low complexity: residues 2292–2308 (SSPP…AEST) and 2442–2458 (RSTP…PTST). A compositionally biased stretch (low complexity) spans 2591–2603 (SAMSTSDIPSSPS). Composition is skewed to low complexity over residues 2929 to 2944 (STDI…TPSS) and 3074 to 3097 (ETPS…TATS). The segment covering 3098-3109 (PETNTLTPTPDI) has biased composition (polar residues). Residues 3309-3359 (TTSHSTPSFTSPIATTKTSSHSSPSFTSSIATLETTSHSTPSFTSSITTNS) show a composition bias toward low complexity. Positions 3360–3370 (HSTPRFSSSIA) are enriched in polar residues. A compositionally biased stretch (low complexity) spans 3371-3385 (TRETTSHSTSSFTPS). The span at 3386-3395 (IATTKTNSNS) shows a compositional bias: polar residues. Residues 3420-3452 (ITTTETTSHSTPSFTSSMATTKTTSHSTPSFTS) show a composition bias toward low complexity. A compositionally biased stretch (polar residues) spans 3453 to 3462 (PIATRETTSH). Residues 3463–3481 (STPSFTSLITTTKTTSHST) are compositionally biased toward low complexity. The span at 3740-3749 (ITTIETPSHG) shows a compositional bias: polar residues. Over residues 3750–3785 (TPSFTSSITSTETTSHSSPSFISSITTTEITSHSTP) the composition is skewed to low complexity. Polar residues predominate over residues 3786 to 3812 (RFTSSITTMETPSHSTPNFTSSITTAE). Low complexity-rich tracts occupy residues 4020–4042 (STPS…PSFT) and 4067–4096 (TSNS…SSMT). Positions 4097–4106 (ATETTSHSTP) are enriched in polar residues. Composition is skewed to low complexity over residues 4182–4228 (TTET…PSFT) and 4237–4249 (TSHS…SSIT). Over residues 4557–4574 (TETTSNSSPSFTSSITNT) the composition is skewed to low complexity. Polar residues predominate over residues 4575–4601 (KTTSYSPPGFTSSIPATETTSRSPPGF). Low complexity predominate over residues 4602–4617 (TSSITTTETTSHSTSS). Over residues 4802–4827 (TSSFTSSITSTETTSHSTPSLTSSIT) the composition is skewed to low complexity. Low complexity predominate over residues 5137–5158 (TPSHITPSFTSTITTSESTSHS). The span at 5159–5170 (NPSLTSAITTTE) shows a compositional bias: polar residues. Composition is skewed to low complexity over residues 5174–5203 (HSPP…ITTT) and 5458–5486 (TEST…PSFT). Over residues 5834–5858 (TTSYSTPSITSSITTTERTSHSTPS) the composition is skewed to low complexity. A compositionally biased stretch (polar residues) spans 5859–5874 (YTSSIATRETPSHTVP). The span at 5875–5889 (SFTSSITTTESTSHS) shows a compositional bias: low complexity. Residues 5890-5901 (NPSLTSAITTTE) are compositionally biased toward polar residues. The segment covering 6045–6059 (SFTSSITTTDSTSHS) has biased composition (low complexity). Over residues 6060–6071 (NPSLTSAITTTE) the composition is skewed to polar residues. Residues 6172-6185 (TESTSHSTPSFTSS) show a composition bias toward low complexity. Residues 6186-6197 (IATTETTSHTPP) are compositionally biased toward polar residues. Positions 6456–6475 (TETPSHSTPSFPSSITTTQS) are enriched in low complexity. Residues 6852 to 6867 (HNTLGLSSSVDTTKTT) are compositionally biased toward polar residues. A compositionally biased stretch (low complexity) spans 6946–6965 (ITTTETTSHSTPSITSSVTT). Positions 6999-7018 (TTESTSHSNPSLTSAITTTE) are enriched in polar residues. The segment covering 7172–7206 (TASHSNPSSTSSITTTESTSHSPPRSTSAIATTGI) has biased composition (low complexity). Composition is skewed to low complexity over residues 7300 to 7329 (TSSI…TSHS) and 7400 to 7427 (SYTS…STET). The segment covering 7476 to 7491 (TETISHSPPSFTSLTN) has biased composition (polar residues). The span at 7492 to 7532 (STETTSHSPPSFTSSSTTTETPSHSTPGFSSSIATSKTTST) shows a compositional bias: low complexity. 2 stretches are compositionally biased toward low complexity: residues 7734 to 7766 (TSHS…ATSK) and 7922 to 7944 (SHST…STPS). Residues 7945-7987 (YTSSIATSETPSHTVPSFTSLITTTDSTSHSNPSLTSAITTTE) are compositionally biased toward polar residues. Residues 8088–8101 (TESTSHSTPSFTSS) show a composition bias toward low complexity. A compositionally biased stretch (polar residues) spans 8102–8113 (IATTETTSHTPP). The segment covering 8372–8391 (TETPSHSTPSFPSSITTTQS) has biased composition (low complexity). Positions 8768 to 8783 (HNTLGLSSSVDTTKTT) are enriched in polar residues. Residues 8862–8881 (ITTTETTSHSTPSITSSVTT) show a composition bias toward low complexity. The span at 8915-8934 (TTESTSHSNPSLTSAITTTE) shows a compositional bias: polar residues. Composition is skewed to low complexity over residues 9067–9081 (PTTE…SFTS) and 9088–9122 (TASH…TTGI). The segment covering 9335 to 9360 (TSSITTTETPSHSSPSFPSSITSTET) has biased composition (low complexity). Polar residues predominate over residues 9409–9424 (TETISHSPPSFTSLTN). Low complexity-rich tracts occupy residues 9425-9465 (STET…TTST), 9566-9585 (SHST…TSHS), and 9612-9624 (TTET…PSFT). Positions 9625–9661 (SSIATAETTSHSPPSFTSLITTSETPSHSNPSFTSLI) are enriched in polar residues. Residues 9662–9674 (TTTESTSHSPPSF) show a composition bias toward low complexity. Composition is skewed to polar residues over residues 9892–9903 (NPSLTSAITNTE) and 9921–9933 (TTSH…TSLI). Over residues 9934-9973 (TSTETTSHSPPSFTSSSTTTETPSHSTPGFSSSIATSKTI) the composition is skewed to low complexity. The segment covering 10120 to 10130 (ITTTETTSHST) has biased composition (low complexity). Residues 10131–10166 (PNITSSVTTTERTSHSTPSYTSSIATGETPSHTVPS) are compositionally biased toward polar residues. Composition is skewed to low complexity over residues 10196 to 10271 (HSPP…SFTS) and 10394 to 10421 (TSET…STPS). Residues 10750–10791 (TTTETTSHSPPRFTSSITTTKTPSDSTPVFTPSIATSETSSH) are compositionally biased toward polar residues. 3 stretches are compositionally biased toward low complexity: residues 10792–10828 (STPG…QRSP), 10887–10937 (TTET…SSIT), and 10950–11032 (PSSI…SPSS). Residues 11278 to 11291 (TETTSHSPPHFTSS) show a composition bias toward low complexity. Residues 11292–11317 (ITRTKTTSHRPPTFTSSITTTESPSH) are compositionally biased toward polar residues. Positions 11566–11682 (TTETTSHSIP…SHSTSGFTSS (117 aa)) are enriched in low complexity. Composition is skewed to polar residues over residues 11683-11697 (NATT…PGFS) and 11754-11769 (TKTT…SSIA). Low complexity-rich tracts occupy residues 11770–11779 (STKTTSHSTP) and 11818–11880 (SIAT…SHST). Composition is skewed to polar residues over residues 11881–11896 (PSFT…TSHS) and 11903–11912 (LIPTTKTTLH). Composition is skewed to low complexity over residues 11913–11949 (SPPS…HSPP) and 12067–12091 (TSSF…TSSI). A compositionally biased stretch (polar residues) spans 12092–12103 (AVTETPSDSTPV). A compositionally biased stretch (low complexity) spans 12280–12309 (TETTSHSAPNFSSSITSTETTSHSTPSFTS). Positions 12310 to 12323 (AITSTETTSHSTPI) are enriched in polar residues. Over residues 12364–12412 (TTETTSHSTPGFASSITTTKTTSHSTPSFTSSIATSNTTSSSTPGFTSS) the composition is skewed to low complexity. Residues 12413 to 12439 (IATTETTSRSTPGFTSSIVTTETTSPH) show a composition bias toward polar residues. Residues 12440 to 12452 (TPGFTSSITTTET) are compositionally biased toward low complexity. The span at 12468-12477 (EMTSHSTPSL) shows a compositional bias: polar residues. Composition is skewed to low complexity over residues 12478–12569 (TFSI…VTTP), 12624–12639 (TSTP…DIPT), 12681–12692 (SSPSIQSTETSS), 12794–12805 (QTTPSIPSLQTS), 12990–13003 (PESE…ASSS), and 13073–13086 (TSET…TPTT). In terms of domain architecture, EGF-like spans 13130–13163 (SGDRCQLQTRCQNGGQWDGLKCQCPSTFYGSSCE). Cystine bridges form between cysteine 13134–cysteine 13140 and cysteine 13153–cysteine 13162. The 126-residue stretch at 13172 to 13297 (DVVETEVGME…DSIKVNNNSK (126 aa)) folds into the SEA domain. A helical transmembrane segment spans residues 13381 to 13401 (LVGGLTAGAALLVLLLLALGV).

In terms of processing, highly O-glycosylated and probably also N-glycosylated. Fetal and adult small intestine and fetal and adult colon.

Its subcellular location is the membrane. Major glycoprotein component of a variety of mucus gels. Thought to provide a protective, lubricating barrier against particles and infectious agents at mucosal surfaces. This is Mucin-3B from Homo sapiens (Human).